A 314-amino-acid polypeptide reads, in one-letter code: 4-hydroxy-3-methylbut-2-enyl diphosphate reductase (314 aa).

[4Fe-4S] cluster is bound at residue C18. (2E)-4-hydroxy-3-methylbut-2-enyl diphosphate is bound by residues H47 and H80. 2 residues coordinate dimethylallyl diphosphate: H47 and H80. The isopentenyl diphosphate site is built by H47 and H80. C102 contributes to the [4Fe-4S] cluster binding site. Position 130 (H130) interacts with (2E)-4-hydroxy-3-methylbut-2-enyl diphosphate. H130 serves as a coordination point for dimethylallyl diphosphate. H130 is an isopentenyl diphosphate binding site. The active-site Proton donor is E132. Residue T171 participates in (2E)-4-hydroxy-3-methylbut-2-enyl diphosphate binding. Position 201 (C201) interacts with [4Fe-4S] cluster. The (2E)-4-hydroxy-3-methylbut-2-enyl diphosphate site is built by S229, S230, N231, and S273. Dimethylallyl diphosphate-binding residues include S229, S230, N231, and S273. Residues S229, S230, N231, and S273 each coordinate isopentenyl diphosphate.

Belongs to the IspH family. [4Fe-4S] cluster serves as cofactor.

The enzyme catalyses isopentenyl diphosphate + 2 oxidized [2Fe-2S]-[ferredoxin] + H2O = (2E)-4-hydroxy-3-methylbut-2-enyl diphosphate + 2 reduced [2Fe-2S]-[ferredoxin] + 2 H(+). It carries out the reaction dimethylallyl diphosphate + 2 oxidized [2Fe-2S]-[ferredoxin] + H2O = (2E)-4-hydroxy-3-methylbut-2-enyl diphosphate + 2 reduced [2Fe-2S]-[ferredoxin] + 2 H(+). It participates in isoprenoid biosynthesis; dimethylallyl diphosphate biosynthesis; dimethylallyl diphosphate from (2E)-4-hydroxy-3-methylbutenyl diphosphate: step 1/1. Its pathway is isoprenoid biosynthesis; isopentenyl diphosphate biosynthesis via DXP pathway; isopentenyl diphosphate from 1-deoxy-D-xylulose 5-phosphate: step 6/6. Its function is as follows. Catalyzes the conversion of 1-hydroxy-2-methyl-2-(E)-butenyl 4-diphosphate (HMBPP) into a mixture of isopentenyl diphosphate (IPP) and dimethylallyl diphosphate (DMAPP). Acts in the terminal step of the DOXP/MEP pathway for isoprenoid precursor biosynthesis. The protein is 4-hydroxy-3-methylbut-2-enyl diphosphate reductase of Phenylobacterium zucineum (strain HLK1).